Here is an 860-residue protein sequence, read N- to C-terminus: Elastin (860 aa).

The signal sequence occupies residues 1–27; sequence MAGLTAVVPQPGVLLILLLNLLHPAQP. A 4-hydroxyproline mark is found at proline 35 and proline 72. A Hydroxyproline modification is found at proline 84. 4-hydroxyproline is present on proline 105. 2 positions are modified to allysine: lysine 123 and lysine 127. Residues proline 217, proline 230, proline 233, and proline 253 each carry the 4-hydroxyproline modification. 3 positions are modified to allysine: lysine 299, lysine 318, and lysine 321. Proline 346 is subject to 4-hydroxyproline. Residues lysine 368 and lysine 371 each carry the allysine modification. Residue proline 383 is modified to Hydroxyproline. 4-hydroxyproline is present on residues proline 399 and proline 405. Hydroxyproline is present on residues proline 410 and proline 415. An allysine mark is found at lysine 431, lysine 435, lysine 438, lysine 481, and lysine 484. A 4-hydroxyproline mark is found at proline 498 and proline 519. Lysine 534, lysine 595, lysine 599, and lysine 603 each carry allysine. A 4-hydroxyproline mark is found at proline 617, proline 626, proline 644, proline 653, and proline 661. Residues lysine 668 and lysine 671 each carry the allysine modification. Proline 702 is subject to 4-hydroxyproline. Allysine occurs at positions 719, 723, 783, and 786. Proline 832 carries the post-translational modification 4-hydroxyproline. The cysteines at positions 850 and 855 are disulfide-linked.

Belongs to the elastin family. In terms of assembly, the polymeric elastin chains are cross-linked together into an extensible 3D network. Forms a ternary complex with BGN and MFAP2. Interacts with MFAP2 via divalent cations (calcium &gt; magnesium &gt; manganese) in a dose-dependent and saturating manner. Interacts with FBLN5 and FBN1. Forms a ternary complex with FBN1 and FBLN2 or FBLN5. Interacts with MFAP4 in a Ca (2+)-dependent manner; this interaction promotes ELN self-assembly. Interacts with EFEMP2 with moderate affinity. Post-translationally, elastin is formed through the cross-linking of its soluble precursor tropoelastin. Cross-linking is initiated through the action of lysyl oxidase on exposed lysines to form allysine. Subsequent spontaneous condensation reactions with other allysine or unmodified lysine residues result in various bi-, tri-, and tetrafunctional cross-links. The most abundant cross-links in mature elastin fibers are lysinonorleucine, allysine aldol, desmosine, and isodesmosine. In terms of processing, hydroxylation on proline residues within the sequence motif, GXPG, is most likely to be 4-hydroxy as this fits the requirement for 4-hydroxylation in vertebrates.

It is found in the secreted. The protein localises to the extracellular space. The protein resides in the extracellular matrix. In terms of biological role, major structural protein of tissues such as aorta and nuchal ligament, which must expand rapidly and recover completely. Molecular determinant of the late arterial morphogenesis, stabilizing arterial structure by regulating proliferation and organization of vascular smooth muscle. The polypeptide is Elastin (Eln) (Mus musculus (Mouse)).